The following is a 235-amino-acid chain: Small ribosomal subunit protein eS4 (235 aa).

In terms of domain architecture, S4 RNA-binding spans 43 to 114 (IPLLLIVRDM…DPHRFLRLIE (72 aa)).

This sequence belongs to the eukaryotic ribosomal protein eS4 family.

This Korarchaeum cryptofilum (strain OPF8) protein is Small ribosomal subunit protein eS4.